The chain runs to 263 residues: 3-methyl-2-oxobutanoate hydroxymethyltransferase (263 aa).

Mg(2+)-binding residues include D43 and D82. 3-methyl-2-oxobutanoate contacts are provided by residues 43-44 (DS), D82, and K111. Position 113 (E113) interacts with Mg(2+). Catalysis depends on E179, which acts as the Proton acceptor.

This sequence belongs to the PanB family. As to quaternary structure, homodecamer; pentamer of dimers. Mg(2+) is required as a cofactor.

It is found in the cytoplasm. The enzyme catalyses 3-methyl-2-oxobutanoate + (6R)-5,10-methylene-5,6,7,8-tetrahydrofolate + H2O = 2-dehydropantoate + (6S)-5,6,7,8-tetrahydrofolate. It functions in the pathway cofactor biosynthesis; (R)-pantothenate biosynthesis; (R)-pantoate from 3-methyl-2-oxobutanoate: step 1/2. In terms of biological role, catalyzes the reversible reaction in which hydroxymethyl group from 5,10-methylenetetrahydrofolate is transferred onto alpha-ketoisovalerate to form ketopantoate. The protein is 3-methyl-2-oxobutanoate hydroxymethyltransferase of Neisseria meningitidis serogroup B (strain ATCC BAA-335 / MC58).